The sequence spans 71 residues: Large ribosomal subunit protein bL31 (71 aa).

Residues C16, C18, C36, and C39 each coordinate Zn(2+).

This sequence belongs to the bacterial ribosomal protein bL31 family. Type A subfamily. Part of the 50S ribosomal subunit. It depends on Zn(2+) as a cofactor.

In terms of biological role, binds the 23S rRNA. In Thermotoga maritima (strain ATCC 43589 / DSM 3109 / JCM 10099 / NBRC 100826 / MSB8), this protein is Large ribosomal subunit protein bL31.